The sequence spans 1275 residues: Rho1 guanine nucleotide exchange factor 3 (1275 aa).

4 disordered regions span residues 1–42, 56–113, 131–188, and 214–248; these read MKLS…SFQK, SPPF…NSAA, NNPL…SPYS, and LSPT…VEYL. Basic and acidic residues predominate over residues 7 to 17; it reads LFHRSSKDHGG. 3 stretches are compositionally biased toward polar residues: residues 32–42, 80–113, and 142–151; these read PHSSSPPSFQK, ASIN…NSAA, and SPGNKQNTVD. Composition is skewed to low complexity over residues 178–188 and 214–228; these read SSVSSHSSPYS and LSPT…SPIR. S293 is subject to Phosphoserine. Positions 465 to 657 constitute a DH domain; sequence ARQNNIHELI…RATCEECDAV (193 aa). One can recognise a PH domain in the interval 692–855; the sequence is EFFFEGIVQR…WVEKINVAKK (164 aa). Positions 930 to 1239 constitute a CNH domain; the sequence is YGDISCIAQF…KYYPSNSDWL (310 aa).

The protein resides in the cytoplasm. In terms of biological role, stimulates the exchange of Rho1 GDP-bound form into GTP-bound form. Regulates, via interaction and activation of Rho1, beta-1,3-glucan biosynthesis and cell wall integrity during septation. Involved in the regulation of contractile ring assembly. This is Rho1 guanine nucleotide exchange factor 3 (rgf3) from Schizosaccharomyces pombe (strain 972 / ATCC 24843) (Fission yeast).